A 122-amino-acid chain; its full sequence is Large ribosomal subunit protein uL14 (122 aa).

It belongs to the universal ribosomal protein uL14 family. In terms of assembly, part of the 50S ribosomal subunit. Forms a cluster with proteins L3 and L19. In the 70S ribosome, L14 and L19 interact and together make contacts with the 16S rRNA in bridges B5 and B8.

Its function is as follows. Binds to 23S rRNA. Forms part of two intersubunit bridges in the 70S ribosome. The polypeptide is Large ribosomal subunit protein uL14 (Sulfurimonas denitrificans (strain ATCC 33889 / DSM 1251) (Thiomicrospira denitrificans (strain ATCC 33889 / DSM 1251))).